Here is a 393-residue protein sequence, read N- to C-terminus: MTVSGDAIPPHGGTLVNRIASPEQAQELRSKAEHCPILHLDERAQSDLEMIAIGGFSPLTGFMGREDYQSVLETMHLANGLAWSLPVTLPVSAEIAADLKEGQTIALANAEGRLLGLLELTEKFTYDKTREAQQVYRTTDEQHPGVKVLYQQGSVYLAGPVTLLQRDPHPLFPAYQIDPAQSRQLFRERGWKTIVGFQTRNPIHRAHEYIQKCALEIVDGLFLHPLVGATKSDDIPAEVRMRCYEVLIEKYYPKERVILAINPAAMRYAGPREAIFHALVRKNYGCTHFIVGRDHAGVGNYYGPYDAQHIFDEFRPEELGIIPLKFEHAFYCTVTGTMATAKTSPSQPHQRIHLSGTKVREMLRRGEIPPPEFSRPEVAQLLAEAMRERGQPE.

The protein belongs to the sulfate adenylyltransferase family.

The catalysed reaction is sulfate + ATP + H(+) = adenosine 5'-phosphosulfate + diphosphate. The protein operates within sulfur metabolism; hydrogen sulfide biosynthesis; sulfite from sulfate: step 1/3. The polypeptide is Sulfate adenylyltransferase (Synechococcus sp. (strain JA-3-3Ab) (Cyanobacteria bacterium Yellowstone A-Prime)).